Here is a 426-residue protein sequence, read N- to C-terminus: Bile acid CoA-transferase BaiF (426 aa).

Aspartate 168 serves as the catalytic Nucleophile.

Belongs to the CoA-transferase III family.

It carries out the reaction lithocholoyl-CoA + cholate = choloyl-CoA + lithocholate. The enzyme catalyses deoxycholoyl-CoA + cholate = choloyl-CoA + deoxycholate. The catalysed reaction is allodeoxycholoyl-CoA + cholate = allodeoxycholate + choloyl-CoA. It catalyses the reaction allocholate + deoxycholoyl-CoA = allocholoyl-CoA + deoxycholate. It carries out the reaction allocholate + lithocholoyl-CoA = allocholoyl-CoA + lithocholate. The enzyme catalyses allocholate + allodeoxycholoyl-CoA = allocholoyl-CoA + allodeoxycholate. The catalysed reaction is lithocholoyl-CoA + chenodeoxycholate = chenodeoxycholoyl-CoA + lithocholate. It catalyses the reaction ursodeoxycholate + deoxycholoyl-CoA = ursodeoxycholoyl-CoA + deoxycholate. It carries out the reaction ursodeoxycholate + lithocholoyl-CoA = ursodeoxycholoyl-CoA + lithocholate. The enzyme catalyses allodeoxycholoyl-CoA + ursodeoxycholate = ursodeoxycholoyl-CoA + allodeoxycholate. The catalysed reaction is beta-muricholate + lithocholoyl-CoA = beta-muricholoyl-CoA + lithocholate. It catalyses the reaction beta-muricholate + deoxycholoyl-CoA = beta-muricholoyl-CoA + deoxycholate. It carries out the reaction beta-muricholate + allodeoxycholoyl-CoA = beta-muricholoyl-CoA + allodeoxycholate. The enzyme catalyses choloyl-CoA + H2O = cholate + CoA + H(+). The catalysed reaction is chenodeoxycholoyl-CoA + H2O = chenodeoxycholate + CoA + H(+). It participates in lipid metabolism; bile acid biosynthesis. Its function is as follows. Functions in the bile acid 7alpha-dehydroxylation pathway, which forms secondary bile acids via the 7alpha-dehydroxylation of primary bile acids, and is carried out by intestinal anaerobic bacteria. Acts as a bile acid CoA transferase with broad bile acid substrate specificity. Catalyzes the transfer of the CoA moiety of secondary bile acid-CoA compounds to primary bile acids. Can use lithocholoyl-CoA, deoxycholoyl-CoA and allodeoxycholoyl-CoA as bile acid CoA donors and cholate, allocholate, chenodeoxycholate, ursodeoxycholate, and beta-muricholate as bile acid CoA acceptors. Also displays CoA hydrolase activity, being able to catalyze the hydrolysis of choloyl-CoA, 3-dehydrocholoyl-CoA, and chenodeoxycholoyl-CoA, releasing CoA and the corresponding free bile acid. However, this latter activity may not represent the actual activity of this enzyme, since using a transferase rather than hydrolase, the bacteria conserve the thioester bond energy, saving ATP molecules. Shows no hydrolytic activity with acetyl-CoA, isovaleryl-CoA, palmitoyl-CoA, or phenylacetyl-CoA as substrates. The chain is Bile acid CoA-transferase BaiF from Clostridium scindens (strain JCM 10418 / VPI 12708).